Consider the following 245-residue polypeptide: Biosynthetic peptidoglycan transglycosylase (245 aa).

Residues 29–49 (IVLAVLIVLILPYALIVFYLL) form a helical membrane-spanning segment.

It belongs to the glycosyltransferase 51 family.

Its subcellular location is the cell inner membrane. The catalysed reaction is [GlcNAc-(1-&gt;4)-Mur2Ac(oyl-L-Ala-gamma-D-Glu-L-Lys-D-Ala-D-Ala)](n)-di-trans,octa-cis-undecaprenyl diphosphate + beta-D-GlcNAc-(1-&gt;4)-Mur2Ac(oyl-L-Ala-gamma-D-Glu-L-Lys-D-Ala-D-Ala)-di-trans,octa-cis-undecaprenyl diphosphate = [GlcNAc-(1-&gt;4)-Mur2Ac(oyl-L-Ala-gamma-D-Glu-L-Lys-D-Ala-D-Ala)](n+1)-di-trans,octa-cis-undecaprenyl diphosphate + di-trans,octa-cis-undecaprenyl diphosphate + H(+). It functions in the pathway cell wall biogenesis; peptidoglycan biosynthesis. Functionally, peptidoglycan polymerase that catalyzes glycan chain elongation from lipid-linked precursors. The sequence is that of Biosynthetic peptidoglycan transglycosylase from Rhizobium johnstonii (strain DSM 114642 / LMG 32736 / 3841) (Rhizobium leguminosarum bv. viciae).